Consider the following 74-residue polypeptide: Large ribosomal subunit protein bL28 (74 aa).

It belongs to the bacterial ribosomal protein bL28 family.

This is Large ribosomal subunit protein bL28 from Buchnera aphidicola subsp. Baizongia pistaciae (strain Bp).